A 470-amino-acid polypeptide reads, in one-letter code: Argininosuccinate lyase (470 aa).

The protein belongs to the lyase 1 family. Argininosuccinate lyase subfamily.

Its subcellular location is the cytoplasm. It catalyses the reaction 2-(N(omega)-L-arginino)succinate = fumarate + L-arginine. Its pathway is amino-acid biosynthesis; L-arginine biosynthesis; L-arginine from L-ornithine and carbamoyl phosphate: step 3/3. This chain is Argininosuccinate lyase, found in Mycolicibacterium vanbaalenii (strain DSM 7251 / JCM 13017 / BCRC 16820 / KCTC 9966 / NRRL B-24157 / PYR-1) (Mycobacterium vanbaalenii).